The chain runs to 754 residues: Ribonucleoside-diphosphate reductase subunit alpha (754 aa).

The ATP-cone domain occupies I4 to G93. Residues T206, S221–C222, G250, N435–E439, and P615–S619 each bind substrate. C222 and C457 form a disulfide bridge. The active-site Proton acceptor is the N435. The active-site Cysteine radical intermediate is the C437. Residue E439 is the Proton acceptor of the active site. A disordered region spans residues Q621–S641.

The protein belongs to the ribonucleoside diphosphate reductase large chain family. As to quaternary structure, heterodimer of a large and a small subunit.

It catalyses the reaction a 2'-deoxyribonucleoside 5'-diphosphate + [thioredoxin]-disulfide + H2O = a ribonucleoside 5'-diphosphate + [thioredoxin]-dithiol. Its activity is regulated as follows. Under complex allosteric control mediated by deoxynucleoside triphosphates and ATP binding. The type of nucleotide bound at the specificity site determines substrate preference. It seems probable that ATP makes the enzyme reduce CDP and UDP, dGTP favors ADP reduction and dTTP favors GDP reduction. Provides the precursors necessary for DNA synthesis. Catalyzes the biosynthesis of deoxyribonucleotides from the corresponding ribonucleotides. The chain is Ribonucleoside-diphosphate reductase subunit alpha (NRDA) from Escherichia coli (Bacteriophage T4).